Consider the following 1017-residue polypeptide: Anaphase-promoting complex subunit 5 (1017 aa).

5 TPR repeats span residues 30–63, 182–214, 252–286, 337–370, and 508–541; these read KQSL…EKEL, DMSM…SPLD, VKRV…VNGQ, PYAV…AQER, and NNNN…WNDI. Residues 451–525 show a composition bias toward low complexity; the sequence is INSNNYNSNN…NNNSSNSNNN (75 aa). Disordered regions lie at residues 451–527 and 617–636; these read INSN…NNGG and NNNN…QQQN. TPR repeat units follow at residues 642 to 675, 756 to 790, 838 to 871, 876 to 908, and 931 to 964; these read LLSF…YKTQ, VICY…SRDF, ADSN…VLSD, SQLY…FLQL, and KEIY…LVPS.

Belongs to the APC5 family. In terms of assembly, the APC/C is composed of at least 13 subunits that stay tightly associated throughout the cell cycle: anapc1, anapc2, anapc3, anapc4, anapc5, anapc6, anapc7, anapc8, anapc10, anapc11, cdc20, cdc26 and cdh1.

It is found in the nucleus. It functions in the pathway protein modification; protein ubiquitination. Its function is as follows. Component of the anaphase promoting complex/cyclosome (APC/C), a cell cycle-regulated E3 ubiquitin-protein ligase complex that controls progression through mitosis and the G1 phase of the cell cycle. The polypeptide is Anaphase-promoting complex subunit 5 (anapc5) (Dictyostelium discoideum (Social amoeba)).